The primary structure comprises 362 residues: Ribosomal RNA large subunit methyltransferase M (362 aa).

Residues S194, 227 to 230 (CPGG), D246, D266, and D284 each bind S-adenosyl-L-methionine. Residue K313 is the Proton acceptor of the active site.

This sequence belongs to the class I-like SAM-binding methyltransferase superfamily. RNA methyltransferase RlmE family. RlmM subfamily. In terms of assembly, monomer.

It localises to the cytoplasm. The enzyme catalyses cytidine(2498) in 23S rRNA + S-adenosyl-L-methionine = 2'-O-methylcytidine(2498) in 23S rRNA + S-adenosyl-L-homocysteine + H(+). In terms of biological role, catalyzes the 2'-O-methylation at nucleotide C2498 in 23S rRNA. The polypeptide is Ribosomal RNA large subunit methyltransferase M (Aggregatibacter aphrophilus (strain NJ8700) (Haemophilus aphrophilus)).